Here is a 157-residue protein sequence, read N- to C-terminus: Small ribosomal subunit protein uS7 (157 aa).

The protein belongs to the universal ribosomal protein uS7 family. Part of the 30S ribosomal subunit. Contacts proteins S9 and S11.

Its function is as follows. One of the primary rRNA binding proteins, it binds directly to 16S rRNA where it nucleates assembly of the head domain of the 30S subunit. Is located at the subunit interface close to the decoding center, probably blocks exit of the E-site tRNA. In Leptospira interrogans serogroup Icterohaemorrhagiae serovar copenhageni (strain Fiocruz L1-130), this protein is Small ribosomal subunit protein uS7.